The sequence spans 220 residues: Guanylate kinase (220 aa).

In terms of domain architecture, Guanylate kinase-like spans 15–194 (GLMLVISSPS…AFDAVQSIVK (180 aa)). Position 22–29 (22–29 (SPSGAGKS)) interacts with ATP.

It belongs to the guanylate kinase family.

The protein localises to the cytoplasm. The enzyme catalyses GMP + ATP = GDP + ADP. Its function is as follows. Essential for recycling GMP and indirectly, cGMP. This chain is Guanylate kinase, found in Rhizobium etli (strain ATCC 51251 / DSM 11541 / JCM 21823 / NBRC 15573 / CFN 42).